Here is an 80-residue protein sequence, read N- to C-terminus: MARLLVVSVGVFLAVIMLSSETMSLPAGENLPALTLFEAQNQLIGLSQEQRQCKKIGEHCYVADECCSKRCLFYAAKCVS.

An N-terminal signal peptide occupies residues 1–24 (MARLLVVSVGVFLAVIMLSSETMS). A propeptide spanning residues 25 to 46 (LPAGENLPALTLFEAQNQLIGL) is cleaved from the precursor. 3 disulfide bridges follow: Cys-53/Cys-67, Cys-60/Cys-71, and Cys-66/Cys-78.

The protein belongs to the asilidin-1 family. As to expression, expressed by the venom gland.

The protein resides in the secreted. Its function is as follows. Neurotoxin that may modulate ions channels (other than those tested). In vivo, induces neurotoxic effects when injected into insects (tested on L.cuprina and A.domesticus). In Dolopus genitalis (Giant Australian assassin fly), this protein is U-Asilidin(1)-Dg12.